The chain runs to 183 residues: Adenine phosphoribosyltransferase (183 aa).

The protein belongs to the purine/pyrimidine phosphoribosyltransferase family. As to quaternary structure, homodimer.

It localises to the cytoplasm. It carries out the reaction AMP + diphosphate = 5-phospho-alpha-D-ribose 1-diphosphate + adenine. It participates in purine metabolism; AMP biosynthesis via salvage pathway; AMP from adenine: step 1/1. Catalyzes a salvage reaction resulting in the formation of AMP, that is energically less costly than de novo synthesis. The chain is Adenine phosphoribosyltransferase from Citrobacter koseri (strain ATCC BAA-895 / CDC 4225-83 / SGSC4696).